A 22-amino-acid chain; its full sequence is Peroxidase 5 (22 aa).

This sequence belongs to the peroxidase family. Classical plant (class III) peroxidase subfamily. It depends on heme b as a cofactor. Ca(2+) is required as a cofactor.

It localises to the secreted. Its subcellular location is the cell wall. It carries out the reaction 2 a phenolic donor + H2O2 = 2 a phenolic radical donor + 2 H2O. Its function is as follows. Removal of H(2)O(2), oxidation of toxic reductants, biosynthesis and degradation of lignin, suberization, auxin catabolism, response to environmental stresses such as wounding, pathogen attack and oxidative stress. These functions might be dependent on each isozyme/isoform in each plant tissue. The protein is Peroxidase 5 of Cycas revoluta (Sago palm).